The following is a 409-amino-acid chain: Nitrogen permease regulator 2 homolog (409 aa).

It belongs to the NPR2 family.

The protein resides in the cytoplasm. It is found in the nucleus. Mediates inactivation of the TORC1 complex in response to amino acid starvation. Post-transcriptional regulator of nitrogen permeases. The sequence is that of Nitrogen permease regulator 2 homolog from Schizosaccharomyces pombe (strain 972 / ATCC 24843) (Fission yeast).